Reading from the N-terminus, the 150-residue chain is Actin-related protein 2/3 complex subunit 5-C (150 aa).

The disordered stretch occupies residues N21–I45.

It belongs to the ARPC5 family. As to quaternary structure, component of the Arp2/3 complex composed of actr2/arp2, actr3/arp3, arpc1 (arpc1a or arpc1b), arpc2, arpc3, arpc4 and arpc5.

The protein localises to the cytoplasm. Its subcellular location is the cytoskeleton. It localises to the cell projection. It is found in the nucleus. Functionally, component of the Arp2/3 complex, a multiprotein complex that mediates actin polymerization upon stimulation by nucleation-promoting factor (NPF). The Arp2/3 complex mediates the formation of branched actin networks in the cytoplasm, providing the force for cell motility. In addition to its role in the cytoplasmic cytoskeleton, the Arp2/3 complex also promotes actin polymerization in the nucleus, thereby regulating gene transcription and repair of damaged DNA. The Arp2/3 complex promotes homologous recombination (HR) repair in response to DNA damage by promoting nuclear actin polymerization, leading to drive motility of double-strand breaks (DSBs). This Xenopus laevis (African clawed frog) protein is Actin-related protein 2/3 complex subunit 5-C (arpc5-c).